We begin with the raw amino-acid sequence, 96 residues long: uncharacterized protein (96 aa).

Basic and acidic residues predominate over residues 1 to 18; that stretch reads MSNVDRYDVHRDGIEKDR. The segment at 1-96 is disordered; the sequence is MSNVDRYDVH…REQHHQPQKQ (96 aa). Positions 28–46 are enriched in polar residues; the sequence is QNGQSQSTMDNRPPWNNDT. Residues 70–96 show a composition bias toward basic and acidic residues; it reads TIDRQQEELTKNWTESLREQHHQPQKQ.

This is an uncharacterized protein from Caenorhabditis elegans.